The sequence spans 160 residues: Ribonuclease P protein component 2 (160 aa).

The protein belongs to the eukaryotic/archaeal RNase P protein component 2 family. Consists of a catalytic RNA component and at least 4-5 protein subunits.

It is found in the cytoplasm. The catalysed reaction is Endonucleolytic cleavage of RNA, removing 5'-extranucleotides from tRNA precursor.. In terms of biological role, part of ribonuclease P, a protein complex that generates mature tRNA molecules by cleaving their 5'-ends. The chain is Ribonuclease P protein component 2 from Methanosphaerula palustris (strain ATCC BAA-1556 / DSM 19958 / E1-9c).